The following is a 556-amino-acid chain: Oxygen-dependent choline dehydrogenase (556 aa).

4–33 is an FAD binding site; that stretch reads DYIIIGAGSAGNVLATRLTEDPNTSVLLLE. The active-site Proton acceptor is H473.

This sequence belongs to the GMC oxidoreductase family. FAD serves as cofactor.

The enzyme catalyses choline + A = betaine aldehyde + AH2. It catalyses the reaction betaine aldehyde + NAD(+) + H2O = glycine betaine + NADH + 2 H(+). It functions in the pathway amine and polyamine biosynthesis; betaine biosynthesis via choline pathway; betaine aldehyde from choline (cytochrome c reductase route): step 1/1. In terms of biological role, involved in the biosynthesis of the osmoprotectant glycine betaine. Catalyzes the oxidation of choline to betaine aldehyde and betaine aldehyde to glycine betaine at the same rate. This Escherichia coli (strain K12 / DH10B) protein is Oxygen-dependent choline dehydrogenase.